Consider the following 1086-residue polypeptide: NAD(P) transhydrogenase, mitochondrial (1086 aa).

A mitochondrion-targeting transit peptide spans 1–43; it reads MAHLLKTVVAGCSCPFLSNLGSSKVLPGKRDFVRTLRTHQALW. Over 44 to 474 the chain is Mitochondrial matrix; the sequence is CKSPVKPGIP…TVSMYTKTLT (431 aa). Lys70 bears the N6-acetyllysine mark. The residue at position 117 (Lys117) is an N6-succinyllysine. 182–184 provides a ligand contact to NAD(+); it reads RVT. The residue at position 224 (Lys224) is an N6-succinyllysine. NAD(+) contacts are provided by residues Val237, 257–259, and Gly287; that span reads DTR. Residue Lys294 is modified to N6-succinyllysine. The NAD(+) site is built by Glu300 and Leu319. Lys331 carries the N6-succinyllysine modification. The residue at position 397 (Lys397) is an N6-acetyllysine. Helical transmembrane passes span 475 to 493, 501 to 521, 527 to 546, and 558 to 578; these read TASV…GIVA, MVTT…GVTP, LMSV…LALM, and SLAA…FLVT. The Mitochondrial matrix segment spans residues 579 to 595; that stretch reads QRMLDMFKRPTDPPEYN. The next 5 membrane-spanning stretches (helical) occupy residues 596 to 616, 622 to 642, 646 to 666, 672 to 691, and 702 to 722; these read YLYL…LYGG, IMYL…STQG, LGNA…LGGL, LLAQ…LTIA, and LVAA…MAEY. Residues 723-739 are Cytoplasmic-facing; the sequence is IVEYPHFAMDATSNFTK. The next 5 membrane-spanning stretches (helical) occupy residues 740–760, 778–797, 801–819, 833–853, and 857–879; these read IVAY…LVAY, HALN…PFMA, FTTG…TLMG, VVIT…GFLL, and LLTI…MCVA. The Mitochondrial matrix portion of the chain corresponds to 880–1086; it reads MNRSLANVIL…QAKVRESYQK (207 aa). NADP(+) is bound by residues Tyr933, 965–970, 1007–1011, 1026–1027, 1042–1049, and 1068–1069; these read VAGRMP, GANDT, GM, KRSLGVGY, and DA. Lys1079 bears the N6-succinyllysine mark.

In the N-terminal section; belongs to the AlaDH/PNT family. It in the C-terminal section; belongs to the PNT beta subunit family. Homodimer. In terms of tissue distribution, widely expressed with expression most readily detectable in adrenal, heart, kidney, thyroid and adipose tissues.

Its subcellular location is the mitochondrion inner membrane. It catalyses the reaction NAD(+) + NADPH + H(+)(in) = NADH + NADP(+) + H(+)(out). In terms of biological role, the transhydrogenation between NADH and NADP is coupled to respiration and ATP hydrolysis and functions as a proton pump across the membrane. May play a role in reactive oxygen species (ROS) detoxification in the adrenal gland. This is NAD(P) transhydrogenase, mitochondrial (Nnt) from Mus musculus (Mouse).